We begin with the raw amino-acid sequence, 60 residues long: Small ribosomal subunit protein eS31 (60 aa).

Zn(2+) is bound by residues cysteine 24, cysteine 27, cysteine 42, and cysteine 45. The C4-type zinc-finger motif lies at 24 to 45 (CPRCGPGVFMADHGNRYACGRC).

This sequence belongs to the eukaryotic ribosomal protein eS31 family. As to quaternary structure, part of the 30S ribosomal subunit. Requires Zn(2+) as cofactor.

The polypeptide is Small ribosomal subunit protein eS31 (Methanopyrus kandleri (strain AV19 / DSM 6324 / JCM 9639 / NBRC 100938)).